The sequence spans 441 residues: uncharacterized protein (441 aa).

Positions 1-23 (MSRKYLLSLLLVGALVISVVASG) are cleaved as a signal peptide. An N-acetylcysteine modification is found at cysteine 24. The S-archaeol cysteine moiety is linked to residue cysteine 24.

Belongs to the bacterial solute-binding protein 1 family.

It is found in the cell membrane. In terms of biological role, probably part of a binding-protein-dependent transport system PH1214/15/16. This is an uncharacterized protein from Pyrococcus horikoshii (strain ATCC 700860 / DSM 12428 / JCM 9974 / NBRC 100139 / OT-3).